Here is a 242-residue protein sequence, read N- to C-terminus: Thaumatin-like protein 2 (242 aa).

The first 23 residues, 1 to 23 (MMKTLGAVLSLSLTLLSFGGAHA), serve as a signal peptide directing secretion. 8 disulfides stabilise this stretch: Cys32/Cys241, Cys77/Cys87, Cys92/Cys99, Cys147/Cys230, Cys152/Cys213, Cys160/Cys176, Cys180/Cys189, and Cys190/Cys200.

This sequence belongs to the thaumatin family. As to expression, preferentially expressed in the abscission zone of fruit. Also expressed in leaf abscission zone.

Its subcellular location is the secreted. Its function is as follows. May be involved in protecting plant tissues from pathogen infection. In Prunus persica (Peach), this protein is Thaumatin-like protein 2.